Reading from the N-terminus, the 383-residue chain is Probable endoplasmic reticulum-Golgi intermediate compartment protein 3 (383 aa).

Over 1–26 (MLISQLKKFDAYPKTVDDFRVKTYTG) the chain is Cytoplasmic. Residues 27–47 (AIVSIIGGVFILWLFFSQVTL) traverse the membrane as a helical segment. The Lumenal portion of the chain corresponds to 48–347 (YFSTDIHHEL…GKSFASFLTN (300 aa)). Residues 348–368 (VCAIIGGVFTVFGIFDSFIYY) form a helical membrane-spanning segment. At 369–383 (STKNLQKKIDLGKTF) the chain is on the cytoplasmic side.

The protein belongs to the ERGIC family.

It is found in the endoplasmic reticulum-Golgi intermediate compartment membrane. The protein resides in the golgi apparatus. The protein localises to the cis-Golgi network membrane. Its subcellular location is the endoplasmic reticulum membrane. Functionally, possible role in transport between endoplasmic reticulum and Golgi. The protein is Probable endoplasmic reticulum-Golgi intermediate compartment protein 3 (ergic3) of Dictyostelium discoideum (Social amoeba).